We begin with the raw amino-acid sequence, 202 residues long: GTP cyclohydrolase-2 (202 aa).

Position 49 to 53 (49 to 53 (RIHSE)) interacts with GTP. 3 residues coordinate Zn(2+): Cys54, Cys65, and Cys67. Residues Gln70, 92–94 (EGR), and Thr114 each bind GTP. Residue Asp126 is the Proton acceptor of the active site. Residue Arg128 is the Nucleophile of the active site. Residues Thr149 and Lys154 each contribute to the GTP site.

The protein belongs to the GTP cyclohydrolase II family. Zn(2+) is required as a cofactor.

The enzyme catalyses GTP + 4 H2O = 2,5-diamino-6-hydroxy-4-(5-phosphoribosylamino)-pyrimidine + formate + 2 phosphate + 3 H(+). It participates in cofactor biosynthesis; riboflavin biosynthesis; 5-amino-6-(D-ribitylamino)uracil from GTP: step 1/4. Its function is as follows. Catalyzes the conversion of GTP to 2,5-diamino-6-ribosylamino-4(3H)-pyrimidinone 5'-phosphate (DARP), formate and pyrophosphate. The sequence is that of GTP cyclohydrolase-2 from Shewanella frigidimarina (strain NCIMB 400).